A 1021-amino-acid polypeptide reads, in one-letter code: MAGISYVASFFLLLTKLSIGQREVTVQKGPLFRAEGYPVSIGCNVTGHQGPSEQHFQWSVYLPTNPTQEVQIISTKDAAFSYAVYTQRVRSGDVYVERVQGNSVLLHISKLQMKDAGEYECHTPNTDEKYYGSYSAKTNLIVIPDTLSATMSSQTLGKEEGEPLALTCEASKATAQHTHLSVTWYLTQDGGGSQATEIISLSKDFILVPGPLYTERFAASDVQLNKLGPTTFRLSIERLQSSDQGQLFCEATEWIQDPDETWMFITKKQTDQTTLRIQPAVKDFQVNITADSLFAEGKPLELVCLVVSSGRDPQLQGIWFFNGTEIAHIDAGGVLGLKNDYKERASQGELQVSKLGPKAFSLKIFSLGPEDEGAYRCVVAEVMKTRTGSWQVLQRKQSPDSHVHLRKPAARSVVMSTKNKQQVVWEGETLAFLCKAGGAESPLSVSWWHIPRDQTQPEFVAGMGQDGIVQLGASYGVPSYHGNTRLEKMDWATFQLEITFTAITDSGTYECRVSEKSRNQARDLSWTQKISVTVKSLESSLQVSLMSRQPQVMLTNTFDLSCVVRAGYSDLKVPLTVTWQFQPASSHIFHQLIRITHNGTIEWGNFLSRFQKKTKVSQSLFRSQLLVHDATEEETGVYQCEVEVYDRNSLYNNRPPRASAISHPLRIAVTLPESKLKVNSRSQVQELSINSNTDIECSILSRSNGNLQLAIIWYFSPVSTNASWLKILEMDQTNVIKTGDEFHTPQRKQKFHTEKVSQDLFQLHILNVEDSDRGKYHCAVEEWLLSTNGTWHKLGEKKSGLTELKLKPTGSKVRVSKVYWTENVTEHREVAIRCSLESVGSSATLYSVMWYWNRENSGSKLLVHLQHDGLLEYGEEGLRRHLHCYRSSSTDFVLKLHQVEMEDAGMYWCRVAEWQLHGHPSKWINQASDESQRMVLTVLPSEPTLPSRICSSAPLLYFLFICPFVLLLLLLISLLCLYWKARKLSTLRSNTRKEKALWVDLKEAGGVTTNRREDEEEDEGN.

Residues 1-20 (MAGISYVASFFLLLTKLSIG) form the signal peptide. Residues 21–954 (QREVTVQKGP…LPSRICSSAP (934 aa)) lie on the Extracellular side of the membrane. Ig-like C2-type domains are found at residues 22–139 (REVT…AKTN), 144–265 (PDTL…WMFI), 279–389 (PAVK…RTGS), 408–525 (PAAR…RDLS), 541–651 (LQVS…NSLY), 656–794 (PRAS…WHKL), and 808–925 (PTGS…KWIN). 2 cysteine pairs are disulfide-bonded: Cys43-Cys121 and Cys168-Cys249. N-linked (GlcNAc...) asparagine glycosylation occurs at Asn44. The EWI motif motif lies at 253-255 (EWI). 5 cysteine pairs are disulfide-bonded: Cys304/Cys377, Cys434/Cys511, Cys562/Cys640, Cys697/Cys778, and Cys834/Cys909. N-linked (GlcNAc...) asparagine glycosylation occurs at Asn322. The chain crosses the membrane as a helical span at residues 955–975 (LLYFLFICPFVLLLLLLISLL). The Cytoplasmic segment spans residues 976-1021 (CLYWKARKLSTLRSNTRKEKALWVDLKEAGGVTTNRREDEEEDEGN).

In terms of processing, N-glycosylated. As to expression, expressed in lung, thymus and small intestine. Detected in cutaneous dendritic cells, activated T-cells, monocytes and granulocytes as well as with epithelial cells with dendritic morphology. Expressed in some leukemic cells, the CD4(+) CD56(+) blastic tumor cells, as well as in Langerhans cells from LCH (Langerhans cell histiocytosis) patients.

Its subcellular location is the membrane. Its function is as follows. Plays a role as inhibitor of T-cells proliferation induced by CD3. Inhibits expression of IL2RA on activated T-cells and secretion of IL2. Inhibits tyrosine kinases that are required for IL2 production and cellular proliferation. Inhibits phospholipase C-gamma-1/PLCG1 phosphorylation and subsequent CD3-induced changes in intracellular free calcium. Prevents nuclear translocation of nuclear factor of activated T-cell to the nucleus. Plays a role in the inhibition of T-cell proliferation via IL10 secretion by cutaneous dendritic cells. May be a marker of CD4(+) CD56(+) leukemic tumor cells. In Homo sapiens (Human), this protein is Immunoglobulin superfamily member 2 (CD101).